The primary structure comprises 379 residues: tRNA-specific 2-thiouridylase MnmA (379 aa).

ATP-binding positions include 9–16 (AMSGGVDS) and Met35. An interaction with target base in tRNA region spans residues 94–96 (NPD). Residue Cys99 is the Nucleophile of the active site. Cys99 and Cys195 are disulfide-bonded. Gly123 contributes to the ATP binding site. The interaction with tRNA stretch occupies residues 145 to 147 (KDQ). The active-site Cysteine persulfide intermediate is Cys195. An interaction with tRNA region spans residues 307–308 (RY).

Belongs to the MnmA/TRMU family.

The protein resides in the cytoplasm. The catalysed reaction is S-sulfanyl-L-cysteinyl-[protein] + uridine(34) in tRNA + AH2 + ATP = 2-thiouridine(34) in tRNA + L-cysteinyl-[protein] + A + AMP + diphosphate + H(+). In terms of biological role, catalyzes the 2-thiolation of uridine at the wobble position (U34) of tRNA, leading to the formation of s(2)U34. This Xylella fastidiosa (strain 9a5c) protein is tRNA-specific 2-thiouridylase MnmA.